The following is a 277-amino-acid chain: Large ribosomal subunit protein uL2 (277 aa).

Disordered regions lie at residues 35–58 and 213–277; these read QPLPKRAGRNNQGKLTVRHHGGGH and WKGI…RKRK.

It belongs to the universal ribosomal protein uL2 family. In terms of assembly, part of the 50S ribosomal subunit. Forms a bridge to the 30S subunit in the 70S ribosome.

Functionally, one of the primary rRNA binding proteins. Required for association of the 30S and 50S subunits to form the 70S ribosome, for tRNA binding and peptide bond formation. It has been suggested to have peptidyltransferase activity; this is somewhat controversial. Makes several contacts with the 16S rRNA in the 70S ribosome. This Staphylococcus carnosus (strain TM300) protein is Large ribosomal subunit protein uL2.